Here is a 261-residue protein sequence, read N- to C-terminus: Prostate-specific antigen (261 aa).

The signal sequence occupies residues 1 to 17; it reads MWVPVVFLTLSVTWIGA. Positions 18 to 24 are cleaved as a propeptide — activation peptide; sequence APLILSR. Residues 25 to 258 enclose the Peptidase S1 domain; sequence IVGGWECEKH…YRKWIKDTIV (234 aa). 5 disulfide bridges follow: cysteine 31–cysteine 173, cysteine 50–cysteine 66, cysteine 152–cysteine 219, cysteine 184–cysteine 198, and cysteine 209–cysteine 234. Residue histidine 65 is the Charge relay system of the active site. N-linked (GlcNAc...) asparagine glycosylation is present at asparagine 69. The active-site Charge relay system is aspartate 120. Serine 213 (charge relay system) is an active-site residue.

It belongs to the peptidase S1 family. Kallikrein subfamily. As to quaternary structure, forms a heterodimer with SERPINA5.

Its subcellular location is the secreted. The enzyme catalyses Preferential cleavage: -Tyr-|-Xaa-.. With respect to regulation, inhibited by SERPINA5. Activity is strongly inhibited by Zn2+, 100 times more abundant in semen than in serum. This inhibition is relieved by exposure to semenogelins, which are avid zinc binders. Its function is as follows. Hydrolyzes semenogelin-1 thus leading to the liquefaction of the seminal coagulum. This Homo sapiens (Human) protein is Prostate-specific antigen (KLK3).